A 171-amino-acid polypeptide reads, in one-letter code: Iron-sulfur cluster assembly protein 3 (171 aa).

A mitochondrion-targeting transit peptide spans M1–D49.

This sequence belongs to the NifU family. In terms of assembly, component of the core Fe-S cluster (ISC) assembly machinery. The cofactor is [2Fe-2S] cluster. As to expression, mostly expressed in flowers and pollen, and, to a lower extent, in leaves and roots.

Its subcellular location is the mitochondrion matrix. It participates in cofactor biosynthesis; iron-sulfur cluster biosynthesis. Functionally, scaffold protein for the de novo synthesis of iron-sulfur (Fe-S) clusters within mitochondria, which is required for maturation of both mitochondrial and cytoplasmic [2Fe-2S] and [4Fe-4S] proteins. First, a [2Fe-2S] cluster is transiently assembled on the scaffold protein ISCU (ISU1, ISU2 or ISU3). In a second step, the cluster is released from ISCU, transferred to a glutaredoxin, followed by the formation of mitochondrial [2Fe-2S] proteins, the synthesis of [4Fe-4S] clusters and their target-specific insertion into the recipient apoproteins. Cluster assembly on ISCU depends on the function of the cysteine desulfurase complex NFS1-ISD11, which serves as the sulfur donor for cluster synthesis, the iron-binding protein frataxin as the putative iron donor, and the electron transfer chain comprised of ferredoxin reductase and ferredoxin, which receive their electrons from NADH. The chain is Iron-sulfur cluster assembly protein 3 (ISU3) from Arabidopsis thaliana (Mouse-ear cress).